Here is a 438-residue protein sequence, read N- to C-terminus: Xanthine permease (438 aa).

The next 13 helical transmembrane spans lie at 11-31 (LGIQ…LIVG), 41-61 (LTYL…LQVW), 65-85 (FFGI…SPMI), 100-120 (IIAS…LVSF), 121-141 (FPPV…MPVA), 154-174 (FGDL…VLLY), 180-200 (FIKS…AYFM), 220-240 (FYFG…IVAI), 272-292 (AEGL…TAFS), 308-328 (VIVV…IAAF), 331-351 (IIPS…VIAY), 367-387 (LLIV…PDIF), and 396-416 (LLTT…NIVY).

This sequence belongs to the nucleobase:cation symporter-2 (NCS2) (TC 2.A.40) family.

It is found in the cell membrane. Functionally, transport of xanthine in the cell. This is Xanthine permease (pbuX) from Bacillus subtilis (strain 168).